Reading from the N-terminus, the 568-residue chain is Proton-coupled zinc antiporter SLC30A9, mitochondrial (568 aa).

Residues 1–67 (MLPGLAAAAA…IGTLSQVKLY (67 aa)) constitute a mitochondrion transit peptide. A run of 5 helical transmembrane segments spans residues 239 to 259 (VVMVAICINGLNCFFKFLAWI), 314 to 334 (GVGIFMMGAGLSWYHGVMGLL), 342 to 362 (LLWAYCILAGSLVSEGATLLV), 392 to 412 (VILLEDTAAVLGVIIAATCMG), and 424 to 444 (SLGSLGVGTLLGMVSAFLIYT). The LXXLL motif signature appears at 462 to 466 (LTELL).

The protein belongs to the cation diffusion facilitator (CDF) transporter (TC 2.A.4) family. SLC30A subfamily. In terms of assembly, interacts with GRIP1, ESR1 and AR. In terms of tissue distribution, ubiquitously expressed in fetal and adult tissues and cancer cell lines.

It localises to the mitochondrion membrane. Its subcellular location is the nucleus. The protein resides in the endoplasmic reticulum. The enzyme catalyses Zn(2+)(in) + 2 H(+)(out) = Zn(2+)(out) + 2 H(+)(in). In terms of biological role, mitochondrial proton-coupled zinc ion antiporter mediating the export of zinc from the mitochondria and involved in zinc homeostasis, zinc mobilization as well as mitochondrial morphology and health. In nucleus, functions as a secondary coactivator for nuclear receptors by cooperating with p160 coactivators subtypes. Plays a role in transcriptional activation of Wnt-responsive genes. This is Proton-coupled zinc antiporter SLC30A9, mitochondrial from Homo sapiens (Human).